Reading from the N-terminus, the 454-residue chain is Laccase-3 (454 aa).

Plastocyanin-like domains lie at 1 to 95 (PGPT…GPAT) and 101 to 252 (DLGV…YSGA). N24 carries an N-linked (GlcNAc...) asparagine glycan. 4 residues coordinate Cu cation: H29, H31, H73, and H75. N138, N169, N218, N314, and N334 each carry an N-linked (GlcNAc...) asparagine glycan. A Plastocyanin-like 3 domain is found at 319–454 (DVDWKKPILQ…SEGLAVQFQG (136 aa)). Positions 375, 378, and 380 each coordinate Cu cation. N-linked (GlcNAc...) asparagine glycosylation occurs at N395. H437, C438, H439, and H443 together coordinate Cu cation.

This sequence belongs to the multicopper oxidase family. The cofactor is Cu cation.

Its subcellular location is the secreted. It carries out the reaction 4 hydroquinone + O2 = 4 benzosemiquinone + 2 H2O. Functionally, lignin degradation and detoxification of lignin-derived products. This chain is Laccase-3 (lcc3), found in Botryotinia fuckeliana (Noble rot fungus).